Reading from the N-terminus, the 156-residue chain is Small ribosomal subunit protein uS7 (156 aa).

This sequence belongs to the universal ribosomal protein uS7 family. As to quaternary structure, part of the 30S ribosomal subunit. Contacts proteins S9 and S11.

Functionally, one of the primary rRNA binding proteins, it binds directly to 16S rRNA where it nucleates assembly of the head domain of the 30S subunit. Is located at the subunit interface close to the decoding center, probably blocks exit of the E-site tRNA. The sequence is that of Small ribosomal subunit protein uS7 from Vibrio atlanticus (strain LGP32) (Vibrio splendidus (strain Mel32)).